A 282-amino-acid chain; its full sequence is 2-dehydro-3-deoxyphosphooctonate aldolase (282 aa).

It belongs to the KdsA family.

The protein localises to the cytoplasm. It catalyses the reaction D-arabinose 5-phosphate + phosphoenolpyruvate + H2O = 3-deoxy-alpha-D-manno-2-octulosonate-8-phosphate + phosphate. The protein operates within carbohydrate biosynthesis; 3-deoxy-D-manno-octulosonate biosynthesis; 3-deoxy-D-manno-octulosonate from D-ribulose 5-phosphate: step 2/3. Its pathway is bacterial outer membrane biogenesis; lipopolysaccharide biosynthesis. The chain is 2-dehydro-3-deoxyphosphooctonate aldolase from Shewanella halifaxensis (strain HAW-EB4).